The primary structure comprises 273 residues: Dermonecrotic toxin LspaSicTox-alphaIA2i (273 aa).

The active site involves His-5. Positions 25 and 27 each coordinate Mg(2+). The active-site Nucleophile is the His-41. Intrachain disulfides connect Cys-45–Cys-51 and Cys-47–Cys-190. Asp-85 contributes to the Mg(2+) binding site.

Belongs to the arthropod phospholipase D family. Class II subfamily. It depends on Mg(2+) as a cofactor. In terms of tissue distribution, expressed by the venom gland.

The protein localises to the secreted. The catalysed reaction is an N-(acyl)-sphingosylphosphocholine = an N-(acyl)-sphingosyl-1,3-cyclic phosphate + choline. The enzyme catalyses an N-(acyl)-sphingosylphosphoethanolamine = an N-(acyl)-sphingosyl-1,3-cyclic phosphate + ethanolamine. It catalyses the reaction a 1-acyl-sn-glycero-3-phosphocholine = a 1-acyl-sn-glycero-2,3-cyclic phosphate + choline. It carries out the reaction a 1-acyl-sn-glycero-3-phosphoethanolamine = a 1-acyl-sn-glycero-2,3-cyclic phosphate + ethanolamine. Functionally, dermonecrotic toxins cleave the phosphodiester linkage between the phosphate and headgroup of certain phospholipids (sphingolipid and lysolipid substrates), forming an alcohol (often choline) and a cyclic phosphate. This toxin acts on sphingomyelin (SM). It may also act on ceramide phosphoethanolamine (CPE), lysophosphatidylcholine (LPC) and lysophosphatidylethanolamine (LPE), but not on lysophosphatidylserine (LPS), and lysophosphatidylglycerol (LPG). It acts by transphosphatidylation, releasing exclusively cyclic phosphate products as second products. Induces dermonecrosis, hemolysis, increased vascular permeability, edema, inflammatory response, and platelet aggregation. This is Dermonecrotic toxin LspaSicTox-alphaIA2i from Loxosceles spadicea (Recluse spider).